The primary structure comprises 493 residues: Glutamate--tRNA ligase (493 aa).

Residues proline 10–threonine 20 carry the 'HIGH' region motif. Positions lysine 251–arginine 255 match the 'KMSKS' region motif. Lysine 254 lines the ATP pocket.

Belongs to the class-I aminoacyl-tRNA synthetase family. Glutamate--tRNA ligase type 1 subfamily. In terms of assembly, monomer.

The protein resides in the cytoplasm. It catalyses the reaction tRNA(Glu) + L-glutamate + ATP = L-glutamyl-tRNA(Glu) + AMP + diphosphate. In terms of biological role, catalyzes the attachment of glutamate to tRNA(Glu) in a two-step reaction: glutamate is first activated by ATP to form Glu-AMP and then transferred to the acceptor end of tRNA(Glu). This Pseudomonas entomophila (strain L48) protein is Glutamate--tRNA ligase.